The chain runs to 620 residues: Probable translation initiation factor IF-2 (620 aa).

Residues 1-10 (MSDTDADADT) show a composition bias toward acidic residues. Positions 1-29 (MSDTDADADTDAVSTTETSMNADANANAD) are disordered. The segment covering 11–29 (DAVSTTETSMNADANANAD) has biased composition (low complexity). The tr-type G domain maps to 33–248 (LRTPIVAVLG…VLMGLSQRYM (216 aa)). The tract at residues 42–49 (GHVDHGKT) is G1. A GTP-binding site is contributed by 42-49 (GHVDHGKT). The tract at residues 67–71 (AITQH) is G2. Residues 104 to 107 (DTPG) are G3. GTP is bound by residues 104-108 (DTPGH) and 158-161 (NKVD). Residues 158–161 (NKVD) are G4. Polar residues predominate over residues 162–183 (TTPGWTPTDGSPIQPTYESQPS). Residues 162–185 (TTPGWTPTDGSPIQPTYESQPSAA) form a disordered region. A G5 region spans residues 226 to 228 (SAI).

Belongs to the TRAFAC class translation factor GTPase superfamily. Classic translation factor GTPase family. IF-2 subfamily.

Its function is as follows. Function in general translation initiation by promoting the binding of the formylmethionine-tRNA to ribosomes. Seems to function along with eIF-2. This chain is Probable translation initiation factor IF-2, found in Haloquadratum walsbyi (strain DSM 16790 / HBSQ001).